A 40-amino-acid polypeptide reads, in one-letter code: Photosystem II reaction center protein J (40 aa).

A helical membrane pass occupies residues 8 to 28 (IPLWIIGTGAGILVIGLIGIF).

This sequence belongs to the PsbJ family. PSII is composed of 1 copy each of membrane proteins PsbA, PsbB, PsbC, PsbD, PsbE, PsbF, PsbH, PsbI, PsbJ, PsbK, PsbL, PsbM, PsbT, PsbX, PsbY, PsbZ, Psb30/Ycf12, at least 3 peripheral proteins of the oxygen-evolving complex and a large number of cofactors. It forms dimeric complexes.

The protein resides in the plastid. Its subcellular location is the chloroplast thylakoid membrane. Its function is as follows. One of the components of the core complex of photosystem II (PSII). PSII is a light-driven water:plastoquinone oxidoreductase that uses light energy to abstract electrons from H(2)O, generating O(2) and a proton gradient subsequently used for ATP formation. It consists of a core antenna complex that captures photons, and an electron transfer chain that converts photonic excitation into a charge separation. The chain is Photosystem II reaction center protein J from Aethionema grandiflorum (Persian stone-cress).